Consider the following 142-residue polypeptide: Small ribosomal subunit protein uS12 (142 aa).

It belongs to the universal ribosomal protein uS12 family. In terms of assembly, part of the 30S ribosomal subunit.

In terms of biological role, with S4 and S5 plays an important role in translational accuracy. Located at the interface of the 30S and 50S subunits. This is Small ribosomal subunit protein uS12 from Methanococcoides burtonii (strain DSM 6242 / NBRC 107633 / OCM 468 / ACE-M).